We begin with the raw amino-acid sequence, 790 residues long: Penicillin-binding protein 1A (790 aa).

Topologically, residues methionine 1 to threonine 20 are cytoplasmic. Residues phenylalanine 21–alanine 41 traverse the membrane as a helical; Signal-anchor for type II membrane protein segment. Residues methionine 42–isoleucine 790 lie on the Extracellular side of the membrane. The transglycosylase stretch occupies residues serine 61–alanine 230. Residue glutamate 100 is the Proton donor; for transglycosylase activity of the active site. A transpeptidase region spans residues alanine 363–glycine 656. The active-site Acyl-ester intermediate; for transpeptidase activity is serine 402. The segment at asparagine 720–isoleucine 790 is disordered. Positions aspartate 724–asparagine 740 are enriched in acidic residues. Positions lysine 741–serine 779 are enriched in basic and acidic residues. Residues lysine 780 to isoleucine 790 show a composition bias toward basic residues.

This sequence in the N-terminal section; belongs to the glycosyltransferase 51 family. It in the C-terminal section; belongs to the transpeptidase family.

The protein resides in the cell membrane. The enzyme catalyses [GlcNAc-(1-&gt;4)-Mur2Ac(oyl-L-Ala-gamma-D-Glu-L-Lys-D-Ala-D-Ala)](n)-di-trans,octa-cis-undecaprenyl diphosphate + beta-D-GlcNAc-(1-&gt;4)-Mur2Ac(oyl-L-Ala-gamma-D-Glu-L-Lys-D-Ala-D-Ala)-di-trans,octa-cis-undecaprenyl diphosphate = [GlcNAc-(1-&gt;4)-Mur2Ac(oyl-L-Ala-gamma-D-Glu-L-Lys-D-Ala-D-Ala)](n+1)-di-trans,octa-cis-undecaprenyl diphosphate + di-trans,octa-cis-undecaprenyl diphosphate + H(+). It carries out the reaction Preferential cleavage: (Ac)2-L-Lys-D-Ala-|-D-Ala. Also transpeptidation of peptidyl-alanyl moieties that are N-acyl substituents of D-alanine.. The protein operates within cell wall biogenesis; peptidoglycan biosynthesis. Cell wall formation. Synthesis of cross-linked peptidoglycan from the lipid intermediates. The enzyme has a penicillin-insensitive transglycosylase N-terminal domain (formation of linear glycan strands) and a penicillin-sensitive transpeptidase C-terminal domain (cross-linking of the peptide subunits). This chain is Penicillin-binding protein 1A (pbpA), found in Clostridium tetani (strain Massachusetts / E88).